The following is a 292-amino-acid chain: Shikimate dehydrogenase (NADP(+)) (292 aa).

Residues 22–24 and serine 69 contribute to the shikimate site; that span reads SLS. Catalysis depends on lysine 73, which acts as the Proton acceptor. Residues asparagine 94 and aspartate 111 each contribute to the shikimate site. Residues 135–139 and isoleucine 236 contribute to the NADP(+) site; that span reads GVGGA. Residue tyrosine 238 coordinates shikimate. Position 260 (glycine 260) interacts with NADP(+).

Belongs to the shikimate dehydrogenase family. As to quaternary structure, homodimer.

It carries out the reaction shikimate + NADP(+) = 3-dehydroshikimate + NADPH + H(+). The protein operates within metabolic intermediate biosynthesis; chorismate biosynthesis; chorismate from D-erythrose 4-phosphate and phosphoenolpyruvate: step 4/7. In terms of biological role, involved in the biosynthesis of the chorismate, which leads to the biosynthesis of aromatic amino acids. Catalyzes the reversible NADPH linked reduction of 3-dehydroshikimate (DHSA) to yield shikimate (SA). This is Shikimate dehydrogenase (NADP(+)) from Streptococcus pyogenes serotype M2 (strain MGAS10270).